A 310-amino-acid polypeptide reads, in one-letter code: Putative carboxypeptidase SCO6489 (310 aa).

Ser116 functions as the Nucleophile in the catalytic mechanism. Catalysis depends on charge relay system residues Glu212 and His277.

The protein belongs to the peptidase S66 family.

This is Putative carboxypeptidase SCO6489 from Streptomyces coelicolor (strain ATCC BAA-471 / A3(2) / M145).